Here is a 433-residue protein sequence, read N- to C-terminus: Mitochondrial inner membrane protein OXA1L (433 aa).

Over 1 to 108 (MARNLVCGRW…QCATEPSFTE (108 aa)) the chain is Mitochondrial intermembrane. A helical membrane pass occupies residues 109–129 (LGLGSYTPVGLIQNLLEYIHV). Residues 130 to 134 (DLGLP) lie on the Mitochondrial matrix side of the membrane. A helical membrane pass occupies residues 135–155 (WWGAIATCTVLARCLVFPLIV). The Mitochondrial intermembrane segment spans residues 156–207 (KGQREAAKIHNHMPEMQKFSARIREAKLAGDQAEFYKATIEMTRYQKKHDIK). A helical transmembrane segment spans residues 208 to 228 (LLRPLILPLTQAPVFISFFIA). Over 229 to 255 (LREMANLPVPSLQTGGLWWFQDLTVSD) the chain is Mitochondrial matrix. Residues 256-276 (PIYVLPLVVTATMWCVLELGA) traverse the membrane as a helical segment. At 277–293 (ETGVQSNDLQFMRNIIR) the chain is on the mitochondrial intermembrane side. Residues 294 to 314 (VMPLVVLPVTIHFPSAVFMYW) form a helical membrane-spanning segment. Residues 315 to 433 (LSSNVFSLCQ…AKKPWQDTLG (119 aa)) lie on the Mitochondrial matrix side of the membrane. S359 bears the Phosphoserine mark. A phosphothreonine mark is found at T395 and T397. The disordered stretch occupies residues 397-433 (THNPLLQHDPSHPPKAPNSNNSSIKANAKKPWQDTLG). Positions 413 to 426 (PNSNNSSIKANAKK) are enriched in low complexity.

It belongs to the OXA1/ALB3/YidC family. As to quaternary structure, monomer; predominantly monomeric at low salt concentrations. Homooligomer; predominantly homooligomeric at high salt concentrations. Associates with the mitochondrial ribosome. Associates preferentially as a dimer with the large ribosomal subunit 39S of the mitochondrial ribosome. Interacts with OXA1L; promoting cotranslational quality control in mitochondria.

It localises to the mitochondrion inner membrane. Mitochondrial membrane insertase that mediates the cotranslational insertion of integral membrane proteins into the mitochondrial inner membrane. Essential for the activity and assembly of cytochrome oxidase. Required for the correct biogenesis of ATP synthase and complex I in mitochondria. The sequence is that of Mitochondrial inner membrane protein OXA1L (Oxa1l) from Mus musculus (Mouse).